The primary structure comprises 122 residues: APPPVGDQAGGRKVDCFKYNTTGSAFACTRHERPVCGTDHRTYSNECMFCMLTQNKGFGVRILQDNECDIECTQYSDMCTMEYLPLCGSDGKNYSNKCLFCNAVMGSRGALFLAKHGQCQSP.

2 consecutive Kazal-like domains span residues 10 to 70 (GGRK…ECDI) and 71 to 121 (ECTQ…QCQS). 6 disulfides stabilise this stretch: Cys16/Cys50, Cys28/Cys47, Cys36/Cys68, Cys72/Cys101, Cys79/Cys98, and Cys87/Cys119.

The protein localises to the secreted. This inhibitor is composed of two homologous actively inhibiting halves: one which inhibits trypsin, the other which inhibits elastase. This is Double-headed protease inhibitor, submandibular gland from Martes martes (European pine marten).